Here is a 72-residue protein sequence, read N- to C-terminus: Protein kish (72 aa).

The first 26 residues, 1–26 (MVAIFNFQSLLVVILLFICTCTYIRG), serve as a signal peptide directing secretion. The Extracellular segment spans residues 27–47 (SYPSLLEVRDKHSFSGLPRKA). A helical membrane pass occupies residues 48 to 68 (AIIGERLSPWVSACCLIMGLW). Residues 69 to 72 (TLYN) lie on the Cytoplasmic side of the membrane.

This sequence belongs to the KISH family.

It localises to the golgi apparatus membrane. Involved in the early part of the secretory pathway. This chain is Protein kish (tmem167), found in Dictyostelium discoideum (Social amoeba).